A 61-amino-acid polypeptide reads, in one-letter code: Small ribosomal subunit protein uS14C (61 aa).

4 residues coordinate Zn(2+): cysteine 24, cysteine 27, cysteine 40, and cysteine 43.

The protein belongs to the universal ribosomal protein uS14 family. Zinc-binding uS14 subfamily. Part of the 30S ribosomal subunit. Contacts proteins S3 and S10. Requires Zn(2+) as cofactor.

Functionally, binds 16S rRNA, required for the assembly of 30S particles and may also be responsible for determining the conformation of the 16S rRNA at the A site. The protein is Small ribosomal subunit protein uS14C of Enterococcus faecalis (strain ATCC 700802 / V583).